A 435-amino-acid polypeptide reads, in one-letter code: Chromosomal replication initiator protein DnaA (435 aa).

The tract at residues 1 to 70 is domain I, interacts with DnaA modulators; it reads MNIGEKILLL…KHLFEIQNSI (70 aa). The interval 70-98 is domain II; that stretch reads IKVDVSILLKNQVESKKAEQKSVQKQQHS. Residues 99-313 form a domain III, AAA+ region region; sequence LLNPSHTFEN…GILSKLHAYS (215 aa). The ATP site is built by glycine 143, glycine 145, lysine 146, and threonine 147. A domain IV, binds dsDNA region spans residues 314–435; the sequence is QLMHVDIDLQ…ELTNKITSSS (122 aa).

It belongs to the DnaA family. Oligomerizes as a right-handed, spiral filament on DNA at oriC.

It localises to the cytoplasm. Functionally, plays an essential role in the initiation and regulation of chromosomal replication. ATP-DnaA binds to the origin of replication (oriC) to initiate formation of the DNA replication initiation complex once per cell cycle. Binds the DnaA box (a 9 base pair repeat at the origin) and separates the double-stranded (ds)DNA. Forms a right-handed helical filament on oriC DNA; dsDNA binds to the exterior of the filament while single-stranded (ss)DNA is stabiized in the filament's interior. The ATP-DnaA-oriC complex binds and stabilizes one strand of the AT-rich DNA unwinding element (DUE), permitting loading of DNA polymerase. After initiation quickly degrades to an ADP-DnaA complex that is not apt for DNA replication. Binds acidic phospholipids. This Sulfurimonas denitrificans (strain ATCC 33889 / DSM 1251) (Thiomicrospira denitrificans (strain ATCC 33889 / DSM 1251)) protein is Chromosomal replication initiator protein DnaA.